A 287-amino-acid polypeptide reads, in one-letter code: Succinate--CoA ligase [ADP-forming] subunit alpha 2 (287 aa).

Residues 17–20 (TGYQ), lysine 43, and 96–98 (ITE) contribute to the CoA site. Residue tyrosine 159 participates in substrate binding. Histidine 246 (tele-phosphohistidine intermediate) is an active-site residue.

It belongs to the succinate/malate CoA ligase alpha subunit family. In terms of assembly, heterotetramer of two alpha and two beta subunits.

The catalysed reaction is succinate + ATP + CoA = succinyl-CoA + ADP + phosphate. The enzyme catalyses GTP + succinate + CoA = succinyl-CoA + GDP + phosphate. Its pathway is carbohydrate metabolism; tricarboxylic acid cycle; succinate from succinyl-CoA (ligase route): step 1/1. In terms of biological role, succinyl-CoA synthetase functions in the citric acid cycle (TCA), coupling the hydrolysis of succinyl-CoA to the synthesis of either ATP or GTP and thus represents the only step of substrate-level phosphorylation in the TCA. The alpha subunit of the enzyme binds the substrates coenzyme A and phosphate, while succinate binding and nucleotide specificity is provided by the beta subunit. The chain is Succinate--CoA ligase [ADP-forming] subunit alpha 2 from Archaeoglobus fulgidus (strain ATCC 49558 / DSM 4304 / JCM 9628 / NBRC 100126 / VC-16).